We begin with the raw amino-acid sequence, 258 residues long: Alpha-fibrinogenase-like (258 aa).

The first 18 residues, 1 to 18 (MVLIRVLANLLVLQLSYA), serve as a signal peptide directing secretion. Positions 19–24 (QKSSEL) are excised as a propeptide. Residues 25–249 (VVGGHPCNIY…YTDWIHSIIA (225 aa)) form the Peptidase S1 domain. 6 disulfide bridges follow: Cys-31-Cys-163, Cys-50-Cys-66, Cys-98-Cys-256, Cys-142-Cys-210, Cys-174-Cys-189, and Cys-200-Cys-225. An N-linked (GlcNAc...) asparagine glycan is attached at Asn-44. Active-site charge relay system residues include His-65 and Asp-110. The active-site Charge relay system is Ser-204.

It belongs to the peptidase S1 family. Snake venom subfamily. Monomer. Expressed by the venom gland.

The protein resides in the secreted. Degrades alpha chain of fibrinogen (FGA), and has strong caseinolytic activity. Cleaves oxidized insulin B-chain at '40-Tyr-|-Leu-41', '48-Phe-|-Phe-49' and '49-Phe-|-Tyr-50', and glucagon at the bonds '62-Tyr-|-Ser-63', 66-Leu-|-Asp-67' and '78-Leu-|-Met-79' bonds. The sequence is that of Alpha-fibrinogenase-like from Daboia siamensis (Eastern Russel's viper).